Reading from the N-terminus, the 87-residue chain is Small ribosomal subunit protein uS17 (87 aa).

It belongs to the universal ribosomal protein uS17 family. Part of the 30S ribosomal subunit.

One of the primary rRNA binding proteins, it binds specifically to the 5'-end of 16S ribosomal RNA. This chain is Small ribosomal subunit protein uS17, found in Geobacillus kaustophilus (strain HTA426).